The primary structure comprises 348 residues: tRNA N6-adenosine threonylcarbamoyltransferase (348 aa).

Residues His116 and His120 each contribute to the Fe cation site. Substrate is bound by residues 138 to 142 (QVSGG), Asp171, Gly184, Asp188, and Asn277. Fe cation is bound at residue Asp309.

The protein belongs to the KAE1 / TsaD family. Requires Fe(2+) as cofactor.

Its subcellular location is the cytoplasm. It carries out the reaction L-threonylcarbamoyladenylate + adenosine(37) in tRNA = N(6)-L-threonylcarbamoyladenosine(37) in tRNA + AMP + H(+). Functionally, required for the formation of a threonylcarbamoyl group on adenosine at position 37 (t(6)A37) in tRNAs that read codons beginning with adenine. Is involved in the transfer of the threonylcarbamoyl moiety of threonylcarbamoyl-AMP (TC-AMP) to the N6 group of A37, together with TsaE and TsaB. TsaD likely plays a direct catalytic role in this reaction. The chain is tRNA N6-adenosine threonylcarbamoyltransferase from Lactobacillus johnsonii (strain CNCM I-12250 / La1 / NCC 533).